Consider the following 669-residue polypeptide: Myb-like protein M (669 aa).

The disordered stretch occupies residues 27-69 (DPSLMDDEFSDNEYDLSPKDDVPSPSKRGRGQIQNGIRRSPNK). Residues 30 to 40 (LMDDEFSDNEY) show a composition bias toward acidic residues. 2 HTH myb-type domains span residues 60 to 118 (QNGI…SPDI) and 119 to 170 (RKGP…SREV). DNA-binding regions (H-T-H motif) lie at residues 90-114 (WKRI…KRVL) and 142-166 (WKKI…KSLQ). The 52-residue stretch at 172 to 223 (WVPKEDEVLVKKVDEMGENLSWLEVSEYLAKLKHTNTLRTALECKTRYLQLT) folds into the Myb-like domain. Disordered stretches follow at residues 226 to 530 (GGSI…EDNG) and 550 to 636 (IKNK…PHQS). Composition is skewed to low complexity over residues 234 to 382 (NQSN…SSPS), 389 to 415 (NNNN…NSNN), and 450 to 464 (PTSL…SSPS). Residues 465 to 482 (CNNSIRQPSPSPSIKTFK) show a composition bias toward polar residues. 3 stretches are compositionally biased toward low complexity: residues 483–521 (STIV…NNDN), 555–593 (NNNN…NSDN), and 611–636 (SNFK…PHQS).

It is found in the nucleus. The polypeptide is Myb-like protein M (mybM) (Dictyostelium discoideum (Social amoeba)).